The chain runs to 217 residues: Aprataxin-like protein (217 aa).

Residues 6-139 (ALKNYVTSPE…HIHVISKDFH (134 aa)) enclose the HIT domain. 3 interaction with DNA regions span residues 34-38 (DSFPK), 121-132 (HSVPSMANLHIH), and 144-148 (KNKKH). The active-site Nucleophile is His130. Zn(2+)-binding residues include Cys188, Cys191, His205, and Glu209.

The protein localises to the nucleus. Its subcellular location is the cytoplasm. It catalyses the reaction a 5'-end adenosine-5'-diphospho-5'-2'-deoxyribonucleoside-DNA + H2O = a 5'-end 5'-phospho-2'-deoxyribonucleoside-DNA + AMP + 2 H(+). The catalysed reaction is a 5'-end adenosine-5'-diphospho-5'-ribonucleoside-2'-deoxyribonucleotide-DNA + H2O = a 5'-end 5'-phospho-ribonucleoside-2'-deoxyribonucleotide-DNA + AMP + 2 H(+). The enzyme catalyses a 3'-end 2'-deoxyribonucleotide-3'-diphospho-5'-guanosine-DNA + H2O = a 3'-end 2'-deoxyribonucleotide 3'-phosphate-DNA + GMP + 2 H(+). Its function is as follows. DNA-binding protein involved in single-strand DNA break repair, double-strand DNA break repair and base excision repair. Resolves abortive DNA ligation intermediates formed either at base excision sites, or when DNA ligases attempt to repair non-ligatable breaks induced by reactive oxygen species. Catalyzes the release of adenylate groups covalently linked to 5'-phosphate termini, resulting in the production of 5'-phosphate termini that can be efficiently rejoined. Likewise, catalyzes the release of 3'-linked guanosine (DNAppG) and inosine (DNAppI) from DNA, but has higher specific activity with 5'-linked adenosine (AppDNA). This is Aprataxin-like protein (HNT3) from Saccharomyces cerevisiae (strain ATCC 204508 / S288c) (Baker's yeast).